Reading from the N-terminus, the 188-residue chain is Adrenodoxin, mitochondrial (188 aa).

Residues 1 to 64 (MAAAPGARLL…RPLSVSARAR (64 aa)) constitute a mitochondrion transit peptide. S67 bears the Phosphoserine mark. In terms of domain architecture, 2Fe-2S ferredoxin-type spans 69–175 (DKVTVHFKNR…NMTVRVPEAV (107 aa)). K70 bears the N6-acetyllysine; alternate mark. Position 70 is an N6-succinyllysine; alternate (K70). C110, C116, C119, and C156 together coordinate [2Fe-2S] cluster. Position 162 is an N6-succinyllysine (K162). S181 carries the post-translational modification Phosphoserine.

This sequence belongs to the adrenodoxin/putidaredoxin family. As to quaternary structure, interacts with CYP11A1. The cofactor is [2Fe-2S] cluster. Found in all tissues, most abundant in adrenals, ovaries and testes.

The protein localises to the mitochondrion matrix. In terms of biological role, essential for the synthesis of various steroid hormones. Participates in the reduction of mitochondrial cytochrome P450 for steroidogenesis. Transfers electrons from adrenodoxin reductase to CYP11A1, a cytochrome P450 that catalyzes cholesterol side-chain cleavage. Does not form a ternary complex with adrenodoxin reductase and CYP11A1 but shuttles between the two enzymes to transfer electrons. The chain is Adrenodoxin, mitochondrial (Fdx1) from Rattus norvegicus (Rat).